The following is a 235-amino-acid chain: Cytochrome c oxidase subunit 2 (235 aa).

Over 1-14 the chain is Mitochondrial intermembrane; the sequence is MPYPMQLGFQDATS. The helical transmembrane segment at 15-45 threads the bilayer; the sequence is PIMEELMYFHDHTLMIVFLISSLVLYIIILM. Residues 46–59 lie on the Mitochondrial matrix side of the membrane; the sequence is LTTKLTHTSTMDAQ. The chain crosses the membrane as a helical span at residues 60–87; sequence EVETIWTILPAVILILIALPSLRILYMM. At 88–235 the chain is on the mitochondrial intermembrane side; the sequence is DEIYNPYLTV…MQSFLSYLYI (148 aa). 6 residues coordinate Cu cation: His161, Cys196, Glu198, Cys200, His204, and Met207. Position 198 (Glu198) interacts with Mg(2+). A Phosphotyrosine modification is found at Tyr218.

This sequence belongs to the cytochrome c oxidase subunit 2 family. As to quaternary structure, component of the cytochrome c oxidase (complex IV, CIV), a multisubunit enzyme composed of 14 subunits. The complex is composed of a catalytic core of 3 subunits MT-CO1, MT-CO2 and MT-CO3, encoded in the mitochondrial DNA, and 11 supernumerary subunits COX4I, COX5A, COX5B, COX6A, COX6B, COX6C, COX7A, COX7B, COX7C, COX8 and NDUFA4, which are encoded in the nuclear genome. The complex exists as a monomer or a dimer and forms supercomplexes (SCs) in the inner mitochondrial membrane with NADH-ubiquinone oxidoreductase (complex I, CI) and ubiquinol-cytochrome c oxidoreductase (cytochrome b-c1 complex, complex III, CIII), resulting in different assemblies (supercomplex SCI(1)III(2)IV(1) and megacomplex MCI(2)III(2)IV(2)). Found in a complex with TMEM177, COA6, COX18, COX20, SCO1 and SCO2. Interacts with TMEM177 in a COX20-dependent manner. Interacts with COX20. Interacts with COX16. Requires Cu cation as cofactor.

It localises to the mitochondrion inner membrane. It carries out the reaction 4 Fe(II)-[cytochrome c] + O2 + 8 H(+)(in) = 4 Fe(III)-[cytochrome c] + 2 H2O + 4 H(+)(out). In terms of biological role, component of the cytochrome c oxidase, the last enzyme in the mitochondrial electron transport chain which drives oxidative phosphorylation. The respiratory chain contains 3 multisubunit complexes succinate dehydrogenase (complex II, CII), ubiquinol-cytochrome c oxidoreductase (cytochrome b-c1 complex, complex III, CIII) and cytochrome c oxidase (complex IV, CIV), that cooperate to transfer electrons derived from NADH and succinate to molecular oxygen, creating an electrochemical gradient over the inner membrane that drives transmembrane transport and the ATP synthase. Cytochrome c oxidase is the component of the respiratory chain that catalyzes the reduction of oxygen to water. Electrons originating from reduced cytochrome c in the intermembrane space (IMS) are transferred via the dinuclear copper A center (CU(A)) of subunit 2 and heme A of subunit 1 to the active site in subunit 1, a binuclear center (BNC) formed by heme A3 and copper B (CU(B)). The BNC reduces molecular oxygen to 2 water molecules using 4 electrons from cytochrome c in the IMS and 4 protons from the mitochondrial matrix. This is Cytochrome c oxidase subunit 2 (MT-CO2) from Didelphis virginiana (North American opossum).